Consider the following 348-residue polypeptide: MTAQPQTLKIRRPDDWHIHLRDDEMLSTVLPYTSEVFARAIVMPNLAQPITTVASAIAYRERILAAVPVGHKFTPLMTCYLTNSLDVKELTTGFEQGVFTAAKLYPANATTNSTHGVSDIPAIYPLFEQMQKIGMPLLIHGEVTDAAVDIFDREARFIDQILEPIRQKFPELKIVFEHITTKDAADYVLAGNRFLGATVTPQHLMFNRNHMLVGGIRPHLFCLPILKRSTHQQALRAAVASGSDRFFLGTDSAPHAKHRKESSCGCAGVFNAPAALPAYASVFEELNALQHLEAFCALNGPRFYGLPVNDDVVELVRTPFLQPEEIPLGNESVIPFLAGQTLNWSVKR.

Residues histidine 17 and histidine 19 each contribute to the Zn(2+) site. Residues 19–21 and asparagine 45 each bind substrate; that span reads HLR. Residues lysine 103, histidine 140, and histidine 178 each contribute to the Zn(2+) site. Lysine 103 is modified (N6-carboxylysine). Histidine 140 is a binding site for substrate. Leucine 223 lines the substrate pocket. Residue aspartate 251 coordinates Zn(2+). Aspartate 251 is a catalytic residue. 2 residues coordinate substrate: histidine 255 and alanine 267.

Belongs to the metallo-dependent hydrolases superfamily. DHOase family. Class II DHOase subfamily. Homodimer. Zn(2+) is required as a cofactor.

The catalysed reaction is (S)-dihydroorotate + H2O = N-carbamoyl-L-aspartate + H(+). It functions in the pathway pyrimidine metabolism; UMP biosynthesis via de novo pathway; (S)-dihydroorotate from bicarbonate: step 3/3. Its function is as follows. Catalyzes the reversible cyclization of carbamoyl aspartate to dihydroorotate. The chain is Dihydroorotase from Yersinia pseudotuberculosis serotype O:1b (strain IP 31758).